An 836-amino-acid chain; its full sequence is Probable ribonuclease ZC3H12B (836 aa).

A disordered region spans residues 1–92; the sequence is MTATAEVETP…SPCLDRPSFS (92 aa). A compositionally biased stretch (basic and acidic residues) spans 8-28; sequence ETPKMEKSASKEEKQQPKQDS. The span at 35–46 shows a compositional bias: acidic residues; the sequence is DSEEWMSSESDP. The segment covering 50–60 has biased composition (polar residues); it reads SLKSSDNSKSC. Over residues 70–80 the composition is skewed to basic residues; that stretch reads KEMHSKPHRQL. An RNase NYN domain is found at 190–345; sequence LRPVVIDGSN…LGRHGPSLEN (156 aa). The C3H1-type zinc finger occupies 355–380; the sequence is EHKKQPCPYGKKCTYGHKCKYYHPER.

Belongs to the ZC3H12 family. It depends on Mg(2+) as a cofactor.

May function as RNase and regulate the levels of target RNA species. In Homo sapiens (Human), this protein is Probable ribonuclease ZC3H12B (ZC3H12B).